The chain runs to 258 residues: Protein SAWADEE HOMEODOMAIN HOMOLOG 1 (258 aa).

The interval 138 to 244 (AWYDVSSFLT…LVRYELDNTE (107 aa)) is SAWADEE domain. Zn(2+) is bound by residues Cys-191, His-225, Cys-230, and Cys-232.

As to quaternary structure, associates with the RNA polymerase IV (Pol IV) complex. Interacts with NRPD1, NRPD2, NRPD3, NRPD3B, CLSY1 and CLSY2.

The protein resides in the nucleus. Functionally, involved in RNA-directed DNA methylation (RdDM). Required for the silencing of some endogenous RdDM targets and accumulation of 24-nt siRNAs, but not for the production of Pol V-dependent transcripts. Functions in transcriptional silencing through both DNA methylation-dependent and -independent pathways. Required for both maintenance and de-novo DNA methylation. Plays a role in the recruitment of Pol IV to genomic regions associated with K9 methylated histone H3 that are targets for RdDM. This is Protein SAWADEE HOMEODOMAIN HOMOLOG 1 (SHH1) from Arabidopsis thaliana (Mouse-ear cress).